Reading from the N-terminus, the 57-residue chain is Large ribosomal subunit protein bL32 (57 aa).

The disordered stretch occupies residues 1 to 37 (MAVQQNKPTRSKRGMRRSHDALTAVTSLSVDKTSGEK).

The protein belongs to the bacterial ribosomal protein bL32 family.

The chain is Large ribosomal subunit protein bL32 from Escherichia fergusonii (strain ATCC 35469 / DSM 13698 / CCUG 18766 / IAM 14443 / JCM 21226 / LMG 7866 / NBRC 102419 / NCTC 12128 / CDC 0568-73).